The sequence spans 503 residues: Dentin matrix acidic phosphoprotein 1 (503 aa).

The N-terminal stretch at 1–16 (MKTVILLVFLWGLSCA) is a signal peptide. The span at 23–35 (HNTESESSEERTG) shows a compositional bias: basic and acidic residues. The segment at 23–503 (HNTESESSEE…QDDNDCQDGY (481 aa)) is disordered. Positions 54–63 (QASPEGQANS) are enriched in polar residues. Residues 98 to 119 (KEDDEDDSGDDTFGDEDNDLGP) are compositionally biased toward acidic residues. Residues 138 to 150 (DTTQSSEDSTSQE) show a composition bias toward low complexity. The span at 158-175 (SDSKDHDSEDEADSRPEA) shows a compositional bias: basic and acidic residues. Residues 203-215 (SEFDDEGMQSDDP) show a composition bias toward acidic residues. Basic and acidic residues-rich tracts occupy residues 233–243 (RSEESKGDHEP), 267–286 (HVSEEDYRGELTDSNSRETQ), and 293–303 (TASKEESRSES). The segment covering 332-348 (EPSQESSSESQEGVTSE) has biased composition (low complexity). The short motif at 350–352 (RGD) is the Cell attachment site element. Asn356 carries an N-linked (GlcNAc...) asparagine glycan. The span at 362-373 (DQEDSESSEEDS) shows a compositional bias: acidic residues. An N-linked (GlcNAc...) asparagine glycan is attached at Asn394. Residues 407–418 (AQDGDSSSQEGL) show a composition bias toward polar residues. Positions 419-435 (QSQSASTESRSQESQSE) are enriched in low complexity. Asn457 is a glycosylation site (N-linked (GlcNAc...) asparagine). Basic and acidic residues predominate over residues 467 to 492 (EDIRPKNMEADSRKLIVDAYHNKPIG). Residues 493 to 503 (DQDDNDCQDGY) show a composition bias toward acidic residues.

Interacts with importin alpha. In terms of processing, phosphorylated in the cytosol and extracellular matrix and unphosphorylated in the nucleus. Phosphorylation is necessary for nucleocytoplasmic transport and may be catalyzed by a nuclear isoform of CK2 and can be augmented by calcium. Phosphorylated (in vitro) by FAM20C in the extracellular medium at sites within the S-x-E/pS motif. As to expression, expressed in tooth particularly in odontoblast, ameloblast and cementoblast. Also expressed in bone particularly in osteoblast.

The protein localises to the nucleus. The protein resides in the cytoplasm. It localises to the secreted. It is found in the extracellular space. Its subcellular location is the extracellular matrix. May have a dual function during osteoblast differentiation. In the nucleus of undifferentiated osteoblasts, unphosphorylated form acts as a transcriptional component for activation of osteoblast-specific genes like osteocalcin. During the osteoblast to osteocyte transition phase it is phosphorylated and exported into the extracellular matrix, where it regulates nucleation of hydroxyapatite. This is Dentin matrix acidic phosphoprotein 1 from Mus musculus (Mouse).